The chain runs to 267 residues: Tryptophan 2,3-dioxygenase (267 aa).

Residues 44–48 (FITIH) and arginine 114 each bind substrate. A heme-binding site is contributed by histidine 225. Threonine 239 serves as a coordination point for substrate.

The protein belongs to the tryptophan 2,3-dioxygenase family. Homotetramer. Requires heme as cofactor.

It carries out the reaction L-tryptophan + O2 = N-formyl-L-kynurenine. It participates in amino-acid degradation; L-tryptophan degradation via kynurenine pathway; L-kynurenine from L-tryptophan: step 1/2. In terms of biological role, heme-dependent dioxygenase that catalyzes the oxidative cleavage of the L-tryptophan (L-Trp) pyrrole ring and converts L-tryptophan to N-formyl-L-kynurenine. Catalyzes the oxidative cleavage of the indole moiety. The polypeptide is Tryptophan 2,3-dioxygenase (Nocardioides sp. (strain ATCC BAA-499 / JS614)).